The sequence spans 325 residues: Basic membrane protein A (325 aa).

An N-terminal signal peptide occupies residues 1–3 (FLS). Residue Cys4 is the site of N-palmitoyl cysteine attachment. Cys4 is lipidated: S-diacylglycerol cysteine.

The protein belongs to the BMP lipoprotein family. As to quaternary structure, monomer.

Its subcellular location is the cell inner membrane. Its function is as follows. Immunogenic protein. May be part of an ABC-type nucleoside uptake system involved in the purine salvage pathway. This is Basic membrane protein A (bmpA) from Borreliella afzelii (Borrelia afzelii).